Reading from the N-terminus, the 180-residue chain is tRNA (cytidine(56)-2'-O)-methyltransferase (180 aa).

S-adenosyl-L-methionine-binding positions include leucine 83, 115–119 (GAEKV), and 133–140 (VGNQPHSE).

Belongs to the aTrm56 family. Homodimer.

It localises to the cytoplasm. It carries out the reaction cytidine(56) in tRNA + S-adenosyl-L-methionine = 2'-O-methylcytidine(56) in tRNA + S-adenosyl-L-homocysteine + H(+). In terms of biological role, specifically catalyzes the AdoMet-dependent 2'-O-ribose methylation of cytidine at position 56 in tRNAs. This Methanococcus aeolicus (strain ATCC BAA-1280 / DSM 17508 / OCM 812 / Nankai-3) protein is tRNA (cytidine(56)-2'-O)-methyltransferase.